The following is a 717-amino-acid chain: Fatty acid oxidation complex subunit alpha (717 aa).

The enoyl-CoA hydratase/isomerase stretch occupies residues 1–190 (MIHAGNAITV…KDGAVDAVVA (190 aa)). Asp-298 is a binding site for substrate. The segment at 313-717 (HPVNQAAVLG…MAANNKKFYG (405 aa)) is 3-hydroxyacyl-CoA dehydrogenase. Residues Met-326, Asp-345, 402-404 (VTE), Lys-409, and Ser-431 each bind NAD(+). The For 3-hydroxyacyl-CoA dehydrogenase activity role is filled by His-452. Asn-455 is a binding site for NAD(+). Residue Asn-502 coordinates substrate.

This sequence in the N-terminal section; belongs to the enoyl-CoA hydratase/isomerase family. The protein in the C-terminal section; belongs to the 3-hydroxyacyl-CoA dehydrogenase family. In terms of assembly, heterotetramer of two alpha chains (FadB) and two beta chains (FadA).

It catalyses the reaction a (3S)-3-hydroxyacyl-CoA + NAD(+) = a 3-oxoacyl-CoA + NADH + H(+). The enzyme catalyses a (3S)-3-hydroxyacyl-CoA = a (2E)-enoyl-CoA + H2O. It carries out the reaction a 4-saturated-(3S)-3-hydroxyacyl-CoA = a (3E)-enoyl-CoA + H2O. The catalysed reaction is (3S)-3-hydroxybutanoyl-CoA = (3R)-3-hydroxybutanoyl-CoA. It catalyses the reaction a (3Z)-enoyl-CoA = a 4-saturated (2E)-enoyl-CoA. The enzyme catalyses a (3E)-enoyl-CoA = a 4-saturated (2E)-enoyl-CoA. Its pathway is lipid metabolism; fatty acid beta-oxidation. In terms of biological role, involved in the aerobic and anaerobic degradation of long-chain fatty acids via beta-oxidation cycle. Catalyzes the formation of 3-oxoacyl-CoA from enoyl-CoA via L-3-hydroxyacyl-CoA. It can also use D-3-hydroxyacyl-CoA and cis-3-enoyl-CoA as substrate. The sequence is that of Fatty acid oxidation complex subunit alpha from Acinetobacter baumannii (strain AB307-0294).